A 374-amino-acid chain; its full sequence is MEFTDVFYNLENEKQFLAEIDELLTIPYEKNELEIGVSKFLSFINKYGEPYLITEFQLQRCMEKFLNSPLYQLDENAVLSIFYDCFFFLKEQQTLKFIIIVFQSEIQENEYCLRLLASTGFIPVLIKAMKQFKDRSENVAFTSFRYALFLVYYICRSRRLSPTDLVAIDEYFLVNLFKTSEEAWNDEDMDSFGMCVLTLLSINEQFMLVRLASKGSFEIANGIMDLLSSSKVDNGIYSEGLVFTLNREKDPRSRMLILKQLFLLFTTPATYEIFYTNDLNVLIDIFIREINNIPDELSDLRYAYLQVLIPLLENTQVRHPPHYKTKCIVDAVNNVLISHSKSSNMEDARTTDVAIRVLEVPWLQQEMKSLGTAQ.

The protein belongs to the LDB17 family.

It is found in the cytoplasm. It localises to the nucleus. Its subcellular location is the cell tip. May be involved in protein-linked oligosaccharide phosphorylation. The chain is Protein dip1 (dip1) from Schizosaccharomyces pombe (strain 972 / ATCC 24843) (Fission yeast).